The following is a 240-amino-acid chain: MSGDASTPEQDPAQVVADGQQPVETPNDPVETPSASDPGSAAEVSPQTGNNEARLEQLEREHTTLRDEHDVLRGQYMRIAADFDNFRKRQSRDQDDLKIQLTCSTLSEILPVVDNFERARQQLDPQGEEAQALHRSYQGLYKQLVDVLKQLGVAPMRVVGQEFDPTLHEAVLREPSDAHPEDVVIEELQRGYHLNGKVLRHAMVKVSMGPGPQDGASSQPAEAPAADAPAEDSGSGDGNG.

2 disordered regions span residues 1 to 54 (MSGD…NEAR) and 206 to 240 (VSMGPGPQDGASSQPAEAPAADAPAEDSGSGDGNG). Low complexity predominate over residues 215-233 (GASSQPAEAPAADAPAEDS).

Belongs to the GrpE family. As to quaternary structure, homodimer.

It localises to the cytoplasm. Participates actively in the response to hyperosmotic and heat shock by preventing the aggregation of stress-denatured proteins, in association with DnaK and GrpE. It is the nucleotide exchange factor for DnaK and may function as a thermosensor. Unfolded proteins bind initially to DnaJ; upon interaction with the DnaJ-bound protein, DnaK hydrolyzes its bound ATP, resulting in the formation of a stable complex. GrpE releases ADP from DnaK; ATP binding to DnaK triggers the release of the substrate protein, thus completing the reaction cycle. Several rounds of ATP-dependent interactions between DnaJ, DnaK and GrpE are required for fully efficient folding. In Synechococcus sp. (strain WH7803), this protein is Protein GrpE.